The sequence spans 438 residues: Enolase (438 aa).

2 residues coordinate substrate: histidine 159 and glutamate 168. Glutamate 211 acts as the Proton donor in catalysis. Positions 246, 297, and 322 each coordinate Mg(2+). Glutamate 297 and aspartate 322 together coordinate substrate. Lysine 347 acts as the Proton acceptor in catalysis. Residues 374-377 and lysine 398 contribute to the substrate site; that span reads SHRS.

This sequence belongs to the enolase family. In terms of assembly, homodimer. It depends on Mg(2+) as a cofactor.

It localises to the cytoplasm. The catalysed reaction is (2R)-2-phosphoglycerate = phosphoenolpyruvate + H2O. The protein operates within carbohydrate degradation; glycolysis; pyruvate from D-glyceraldehyde 3-phosphate: step 4/5. Functionally, involved in osmoadaptation. The sequence is that of Enolase (enoA) from Emericella nidulans (strain FGSC A4 / ATCC 38163 / CBS 112.46 / NRRL 194 / M139) (Aspergillus nidulans).